The chain runs to 331 residues: UPF0194 membrane protein YbhG (331 aa).

Positions 1–19 (MKKPVVIGLAIAAIVAVIA) are cleaved as a signal peptide. The stretch at 107-208 (EEIAQAAAAV…LDLQDTTLIA (102 aa)) forms a coiled coil.

It belongs to the UPF0194 family.

It is found in the periplasm. This chain is UPF0194 membrane protein YbhG, found in Salmonella gallinarum (strain 287/91 / NCTC 13346).